A 205-amino-acid polypeptide reads, in one-letter code: Dr1-associated corepressor (205 aa).

Residues 14–77 (PARIKKIMQT…SHLKQCIELE (64 aa)) form the Histone-fold domain. The interval 91-205 (PDMQGDGEDN…DAEDEEDYDS (115 aa)) is disordered. Over residues 98–108 (EDNHVDGDKGP) the composition is skewed to basic and acidic residues. Residues 138 to 155 (SEQEDESEDTDTDGEEET) show a composition bias toward acidic residues. Residues 172-192 (PPTPFIPFTSPLPLPPAPPGP) show a composition bias toward pro residues. A compositionally biased stretch (acidic residues) spans 196–205 (DAEDEEDYDS).

Belongs to the NC2 alpha/DRAP1 family. In terms of assembly, heterodimer with DR1. Binds BTAF1. Phosphorylation reduces DNA binding, but has no effect on heterodimerization and TBP binding.

It localises to the nucleus. The association of the DR1/DRAP1 heterodimer with TBP results in a functional repression of both activated and basal transcription of class II genes. This interaction precludes the formation of a transcription-competent complex by inhibiting the association of TFIIA and/or TFIIB with TBP. Can bind to DNA on its own. In Mus musculus (Mouse), this protein is Dr1-associated corepressor (Drap1).